Reading from the N-terminus, the 139-residue chain is Class I hydrophobin 1 (139 aa).

Positions 1-21 (MFFRISTVFVVALAAFAAASP) are cleaved as a signal peptide. 4 disulfides stabilise this stretch: Cys-57-Cys-118, Cys-64-Cys-112, Cys-65-Cys-98, and Cys-119-Cys-132.

It belongs to the fungal hydrophobin family. As to quaternary structure, self-assembles to form functional amyloid fibrils called rodlets. Self-assembly into fibrillar rodlets occurs spontaneously at hydrophobic:hydrophilic interfaces and the rodlets further associate laterally to form amphipathic monolayers.

It localises to the secreted. It is found in the cell wall. Its function is as follows. Aerial growth, conidiation, and dispersal of filamentous fungi in the environment rely upon a capability of their secreting small amphipathic proteins called hydrophobins (HPBs) with low sequence identity. Class I can self-assemble into an outermost layer of rodlet bundles on aerial cell surfaces, conferring cellular hydrophobicity that supports fungal growth, development and dispersal; whereas Class II form highly ordered films at water-air interfaces through intermolecular interactions but contribute nothing to the rodlet structure. Hah1 is a class I hydrophobin that is involved in aerial growth of mycelia, but does not play a role in pathogenesis. This chain is Class I hydrophobin 1, found in Heterobasidion annosum (Root rot fungus).